The primary structure comprises 143 residues: uncharacterized protein (143 aa).

The region spanning 5 to 137 (DARLASDLSL…LRNAADLILE (133 aa)) is the HTH marR-type domain. Positions 51-74 (PGALAIRERVRPPSMTRVIASLAD) form a DNA-binding region, H-T-H motif.

In terms of assembly, homodimer.

This is an uncharacterized protein from Mycobacterium leprae (strain TN).